The sequence spans 242 residues: Lactate utilization protein A 1 (242 aa).

The protein belongs to the LutA/YkgE family.

Is involved in L-lactate degradation and allows cells to grow with lactate as the sole carbon source. This chain is Lactate utilization protein A 1, found in Bacillus anthracis (strain CDC 684 / NRRL 3495).